A 437-amino-acid chain; its full sequence is tRNA-2-methylthio-N(6)-dimethylallyladenosine synthase (437 aa).

One can recognise an MTTase N-terminal domain in the interval 5-121 (KKLYIKTYGC…LPELTARAAT (117 aa)). [4Fe-4S] cluster is bound by residues C14, C50, C84, C159, C163, and C166. The Radical SAM core domain maps to 145–371 (AKRGPTAFLT…QALLTRQQRA (227 aa)). Residues 374–436 (DAKVGTTARV…ANSLRGVLIA (63 aa)) form the TRAM domain.

Belongs to the methylthiotransferase family. MiaB subfamily. As to quaternary structure, monomer. It depends on [4Fe-4S] cluster as a cofactor.

It localises to the cytoplasm. It catalyses the reaction N(6)-dimethylallyladenosine(37) in tRNA + (sulfur carrier)-SH + AH2 + 2 S-adenosyl-L-methionine = 2-methylsulfanyl-N(6)-dimethylallyladenosine(37) in tRNA + (sulfur carrier)-H + 5'-deoxyadenosine + L-methionine + A + S-adenosyl-L-homocysteine + 2 H(+). Its function is as follows. Catalyzes the methylthiolation of N6-(dimethylallyl)adenosine (i(6)A), leading to the formation of 2-methylthio-N6-(dimethylallyl)adenosine (ms(2)i(6)A) at position 37 in tRNAs that read codons beginning with uridine. The polypeptide is tRNA-2-methylthio-N(6)-dimethylallyladenosine synthase (Dinoroseobacter shibae (strain DSM 16493 / NCIMB 14021 / DFL 12)).